We begin with the raw amino-acid sequence, 307 residues long: UPF0749 protein MT1871 (307 aa).

The N-terminal stretch at 1 to 23 is a signal peptide; it reads MAESDRLLGGYDPNAGYSAHAGA. A run of 2 helical transmembrane segments spans residues 67-87 and 152-172; these read VSWMWQALAATLVAAVFAAAV and VLSLAAASAPVVGPGLTVTVT.

Belongs to the UPF0749 family.

The protein resides in the cell membrane. The polypeptide is UPF0749 protein MT1871 (Mycobacterium tuberculosis (strain CDC 1551 / Oshkosh)).